Here is a 1690-residue protein sequence, read N- to C-terminus: DNA-directed RNA polymerase subunit beta' (1690 aa).

The Zn(2+) site is built by Cys-63, Cys-65, Cys-78, and Cys-81. Mg(2+)-binding residues include Asp-753, Asp-755, and Asp-757. The Zn(2+) site is built by Cys-1107, Cys-1295, Cys-1302, and Cys-1305.

It belongs to the RNA polymerase beta' chain family. The RNAP catalytic core consists of 2 alpha, 1 beta, 1 beta' and 1 omega subunit. When a sigma factor is associated with the core the holoenzyme is formed, which can initiate transcription. Requires Mg(2+) as cofactor. Zn(2+) is required as a cofactor.

It carries out the reaction RNA(n) + a ribonucleoside 5'-triphosphate = RNA(n+1) + diphosphate. DNA-dependent RNA polymerase catalyzes the transcription of DNA into RNA using the four ribonucleoside triphosphates as substrates. This Thermotoga neapolitana (strain ATCC 49049 / DSM 4359 / NBRC 107923 / NS-E) protein is DNA-directed RNA polymerase subunit beta'.